We begin with the raw amino-acid sequence, 279 residues long: DegV domain-containing protein SP_1112 (279 aa).

The DegV domain occupies 4–277 (IKIVTDSSVT…ENAWAILIRY (274 aa)). 2 residues coordinate hexadecanoate: threonine 62 and serine 94.

In terms of biological role, may bind long-chain fatty acids, such as palmitate, and may play a role in lipid transport or fatty acid metabolism. The protein is DegV domain-containing protein SP_1112 of Streptococcus pneumoniae serotype 4 (strain ATCC BAA-334 / TIGR4).